We begin with the raw amino-acid sequence, 214 residues long: Adenylate kinase (214 aa).

Residue 10 to 15 (GAGKGT) coordinates ATP. The segment at 30-59 (STGDMFRDHKARGTEIGKQVQAIMDAGGLV) is NMP. AMP-binding positions include T31, R36, 57-59 (GLV), 85-88 (GYPR), and Q92. An LID region spans residues 126 to 163 (GRRSCPRCGAVYHVSQNPPHRAGFCDRDDTALVQREDD). Residue R127 participates in ATP binding. C130 and C133 together coordinate Zn(2+). Residue 136-137 (VY) coordinates ATP. Residues C150 and D153 each coordinate Zn(2+). Positions 160 and 171 each coordinate AMP. Residue G199 participates in ATP binding.

It belongs to the adenylate kinase family. Monomer.

Its subcellular location is the cytoplasm. It catalyses the reaction AMP + ATP = 2 ADP. It participates in purine metabolism; AMP biosynthesis via salvage pathway; AMP from ADP: step 1/1. In terms of biological role, catalyzes the reversible transfer of the terminal phosphate group between ATP and AMP. Plays an important role in cellular energy homeostasis and in adenine nucleotide metabolism. This Anaeromyxobacter sp. (strain K) protein is Adenylate kinase.